Consider the following 457-residue polypeptide: Adenylosuccinate synthetase (457 aa).

Residues Gly45–Lys51 and Gly73–Thr75 contribute to the GTP site. The active-site Proton acceptor is the Asp46. Mg(2+)-binding residues include Asp46 and Gly73. Residues Asp46–Lys49, Asn71–His74, Thr163, Arg177, Asn255, Thr270, and Arg334 contribute to the IMP site. His74 acts as the Proton donor in catalysis. Val330–Arg336 is a binding site for substrate. GTP is bound by residues Arg336, Lys362–Asp364, and Gly444–Gly446.

Belongs to the adenylosuccinate synthetase family. Homodimer. Mg(2+) serves as cofactor.

It is found in the cytoplasm. It catalyses the reaction IMP + L-aspartate + GTP = N(6)-(1,2-dicarboxyethyl)-AMP + GDP + phosphate + 2 H(+). It functions in the pathway purine metabolism; AMP biosynthesis via de novo pathway; AMP from IMP: step 1/2. Functionally, plays an important role in the de novo pathway and in the salvage pathway of purine nucleotide biosynthesis. Catalyzes the first committed step in the biosynthesis of AMP from IMP. This Aedes aegypti (Yellowfever mosquito) protein is Adenylosuccinate synthetase.